A 234-amino-acid polypeptide reads, in one-letter code: Orotidine 5'-phosphate decarboxylase (234 aa).

Substrate-binding positions include D11, K33, 60–69 (DLKFHDIPNT), T120, R181, Q190, G210, and R211. K62 functions as the Proton donor in the catalytic mechanism.

The protein belongs to the OMP decarboxylase family. Type 1 subfamily. In terms of assembly, homodimer.

It catalyses the reaction orotidine 5'-phosphate + H(+) = UMP + CO2. Its pathway is pyrimidine metabolism; UMP biosynthesis via de novo pathway; UMP from orotate: step 2/2. Functionally, catalyzes the decarboxylation of orotidine 5'-monophosphate (OMP) to uridine 5'-monophosphate (UMP). This Aliivibrio fischeri (strain ATCC 700601 / ES114) (Vibrio fischeri) protein is Orotidine 5'-phosphate decarboxylase.